The primary structure comprises 374 residues: Tryptophan--tRNA ligase (374 aa).

Positions 71 to 79 (PSGRMHLGH) match the 'HIGH' region motif. The short motif at 247 to 251 (KMSSS) is the 'KMSKS' region element.

This sequence belongs to the class-I aminoacyl-tRNA synthetase family.

Its subcellular location is the cytoplasm. The catalysed reaction is tRNA(Trp) + L-tryptophan + ATP = L-tryptophyl-tRNA(Trp) + AMP + diphosphate + H(+). The sequence is that of Tryptophan--tRNA ligase from Methanopyrus kandleri (strain AV19 / DSM 6324 / JCM 9639 / NBRC 100938).